Here is a 192-residue protein sequence, read N- to C-terminus: Casparian strip membrane protein 1 (192 aa).

Residues 1–30 lie on the Cytoplasmic side of the membrane; sequence MSTTVDVPESSNVAKGKAIAVARPGGWKKG. Residues 31–51 form a helical membrane-spanning segment; sequence LAIMDFILRLGGIAASLGAAA. Over 52 to 80 the chain is Extracellular; sequence TMGTSDQTLPFFTQFFQFEASYDSFTTFQ. Residues 81–101 form a helical membrane-spanning segment; that stretch reads FFVITMALVAGYLVLSLPFSV. Residues 102 to 113 are Cytoplasmic-facing; sequence VAIIRPHAPGPR. The helical transmembrane segment at 114 to 134 threads the bilayer; that stretch reads LFLIILDTVFLTLATASGASA. The Extracellular portion of the chain corresponds to 135 to 166; that stretch reads AAIVYLAHNGNQDSNWLAICNQFGDFCAQTSG. The helical transmembrane segment at 167-187 threads the bilayer; sequence AVVASFVAVVILVLLVIMSAL. The Cytoplasmic segment spans residues 188 to 192; it reads ALRRH.

This sequence belongs to the Casparian strip membrane proteins (CASP) family. As to quaternary structure, homodimer and heterodimers.

The protein localises to the cell membrane. Its function is as follows. Regulates membrane-cell wall junctions and localized cell wall deposition. Required for establishment of the Casparian strip membrane domain (CSD) and the subsequent formation of Casparian strips, a cell wall modification of the root endodermis that determines an apoplastic barrier between the intraorganismal apoplasm and the extraorganismal apoplasm and prevents lateral diffusion. The protein is Casparian strip membrane protein 1 of Vigna unguiculata (Cowpea).